Here is a 120-residue protein sequence, read N- to C-terminus: Neuromedin-B (120 aa).

A signal peptide spans 1–29 (MSAVPLTRMLPLRFLTHLLLLSFIPLYFC). Positions 30 to 44 (MEFSEDARNIEKIRR) are excised as a propeptide. At Met54 the chain carries Methionine amide. Residues 58 to 120 (SLQDTYNPSE…MDDYIKTTQK (63 aa)) constitute a propeptide that is removed on maturation.

It belongs to the bombesin/neuromedin-B/ranatensin family. Brain, intestine, and ovaries and early embryos (stages 2 and 10).

Its subcellular location is the secreted. Its function is as follows. Stimulates smooth muscle contraction. The polypeptide is Neuromedin-B (nmb) (Xenopus laevis (African clawed frog)).